The sequence spans 159 residues: Ribosomal RNA large subunit methyltransferase H (159 aa).

Residues L76, G108, and 127-132 (FGRMTL) each bind S-adenosyl-L-methionine.

It belongs to the RNA methyltransferase RlmH family. As to quaternary structure, homodimer.

Its subcellular location is the cytoplasm. The enzyme catalyses pseudouridine(1915) in 23S rRNA + S-adenosyl-L-methionine = N(3)-methylpseudouridine(1915) in 23S rRNA + S-adenosyl-L-homocysteine + H(+). In terms of biological role, specifically methylates the pseudouridine at position 1915 (m3Psi1915) in 23S rRNA. This is Ribosomal RNA large subunit methyltransferase H from Lactococcus lactis subsp. cremoris (strain SK11).